Consider the following 516-residue polypeptide: Probable metalloreductase AIM14 (516 aa).

The next 7 helical transmembrane spans lie at 18–38 (IGYG…LLLL), 64–84 (LHLP…YSVI), 97–117 (LSYV…YILS), 128–148 (HMWL…AFVI), 168–188 (LLGF…TGVI), 195–215 (SFYM…PVHA), and 217–237 (PGVA…HALA). One can recognise a Ferric oxidoreductase domain in the interval 94-207 (LGRLSYVLLF…MVHQINAFAI (114 aa)). Residues 238-363 (RVSFCMSSAV…GGTGISLGLP (126 aa)) enclose the FAD-binding FR-type domain.

It belongs to the ferric reductase (FRE) family. AIM14 subfamily.

The protein resides in the membrane. Functionally, probable cell surface metalloreductase. May be involved in iron or copper homeostasis. This Eremothecium gossypii (strain ATCC 10895 / CBS 109.51 / FGSC 9923 / NRRL Y-1056) (Yeast) protein is Probable metalloreductase AIM14 (AIM14).